Reading from the N-terminus, the 33-residue chain is Cytochrome c oxidase subunit 5B liver, mitochondrial (33 aa).

It belongs to the cytochrome c oxidase subunit 5B family. In terms of assembly, component of the cytochrome c oxidase (complex IV, CIV), a multisubunit enzyme composed of 14 subunits. The complex is composed of a catalytic core of 3 subunits MT-CO1, MT-CO2 and MT-CO3, encoded in the mitochondrial DNA, and 11 supernumerary subunits COX4I, COX5A, COX5B, COX6A, COX6B, COX6C, COX7A, COX7B, COX7C, COX8 and NDUFA4, which are encoded in the nuclear genome. The complex exists as a monomer or a dimer and forms supercomplexes (SCs) in the inner mitochondrial membrane with NADH-ubiquinone oxidoreductase (complex I, CI) and ubiquinol-cytochrome c oxidoreductase (cytochrome b-c1 complex, complex III, CIII), resulting in different assemblies (supercomplex SCI(1)III(2)IV(1) and megacomplex MCI(2)III(2)IV(2)).

The protein resides in the mitochondrion inner membrane. The protein operates within energy metabolism; oxidative phosphorylation. Component of the cytochrome c oxidase, the last enzyme in the mitochondrial electron transport chain which drives oxidative phosphorylation. The respiratory chain contains 3 multisubunit complexes succinate dehydrogenase (complex II, CII), ubiquinol-cytochrome c oxidoreductase (cytochrome b-c1 complex, complex III, CIII) and cytochrome c oxidase (complex IV, CIV), that cooperate to transfer electrons derived from NADH and succinate to molecular oxygen, creating an electrochemical gradient over the inner membrane that drives transmembrane transport and the ATP synthase. Cytochrome c oxidase is the component of the respiratory chain that catalyzes the reduction of oxygen to water. Electrons originating from reduced cytochrome c in the intermembrane space (IMS) are transferred via the dinuclear copper A center (CU(A)) of subunit 2 and heme A of subunit 1 to the active site in subunit 1, a binuclear center (BNC) formed by heme A3 and copper B (CU(B)). The BNC reduces molecular oxygen to 2 water molecules using 4 electrons from cytochrome c in the IMS and 4 protons from the mitochondrial matrix. The polypeptide is Cytochrome c oxidase subunit 5B liver, mitochondrial (Oncorhynchus mykiss (Rainbow trout)).